The chain runs to 202 residues: Dephospho-CoA kinase (202 aa).

One can recognise a DPCK domain in the interval 6–202; the sequence is KVSITGDLSS…EYFYALKGAL (197 aa). ATP is bound at residue 14-19; it reads SSGKTE.

It belongs to the CoaE family.

The protein localises to the cytoplasm. The enzyme catalyses 3'-dephospho-CoA + ATP = ADP + CoA + H(+). The protein operates within cofactor biosynthesis; coenzyme A biosynthesis; CoA from (R)-pantothenate: step 5/5. Its function is as follows. Catalyzes the phosphorylation of the 3'-hydroxyl group of dephosphocoenzyme A to form coenzyme A. The protein is Dephospho-CoA kinase of Chlamydia caviae (strain ATCC VR-813 / DSM 19441 / 03DC25 / GPIC) (Chlamydophila caviae).